A 269-amino-acid chain; its full sequence is Tryptophan synthase alpha chain (269 aa).

Residues E49 and D60 each act as proton acceptor in the active site.

It belongs to the TrpA family. In terms of assembly, tetramer of two alpha and two beta chains.

The catalysed reaction is (1S,2R)-1-C-(indol-3-yl)glycerol 3-phosphate + L-serine = D-glyceraldehyde 3-phosphate + L-tryptophan + H2O. It functions in the pathway amino-acid biosynthesis; L-tryptophan biosynthesis; L-tryptophan from chorismate: step 5/5. In terms of biological role, the alpha subunit is responsible for the aldol cleavage of indoleglycerol phosphate to indole and glyceraldehyde 3-phosphate. This chain is Tryptophan synthase alpha chain, found in Pseudomonas syringae pv. syringae.